Reading from the N-terminus, the 257-residue chain is Acetylglutamate kinase (257 aa).

Substrate is bound by residues 43 to 44 (GG), Arg-65, and Asn-157. Residues 180-185 (DVSGIL) and 208-210 (IIT) each bind ATP.

Belongs to the acetylglutamate kinase family. ArgB subfamily. As to quaternary structure, homodimer.

The protein localises to the cytoplasm. The enzyme catalyses N-acetyl-L-glutamate + ATP = N-acetyl-L-glutamyl 5-phosphate + ADP. The protein operates within amino-acid biosynthesis; L-arginine biosynthesis; N(2)-acetyl-L-ornithine from L-glutamate: step 2/4. Its function is as follows. Catalyzes the ATP-dependent phosphorylation of N-acetyl-L-glutamate. This Salmonella paratyphi A (strain AKU_12601) protein is Acetylglutamate kinase.